A 372-amino-acid polypeptide reads, in one-letter code: Alpha-parvin (372 aa).

Residues 1-11 (MATSPQKSPSV) are compositionally biased toward low complexity. A disordered region spans residues 1–44 (MATSPQKSPSVPKSPTPKSPPSRKKDDSFLGKLGGTLARRKKAK). An N-acetylalanine modification is found at Ala-2. Phosphoserine is present on residues Ser-8, Ser-14, and Ser-19. Residues 21–25 (PSRKK) are interaction with ARHGAP31. 2 positions are modified to phosphoserine: Ser-28 and Ser-62. 2 consecutive Calponin-homology (CH) domains span residues 95–202 (QELM…QYFR) and 262–369 (NVVK…TKYR). Residues 223 to 372 (GILQSRQIQE…NLFTKYRNVE (150 aa)) are required for interaction with TESK1 and ILK.

It belongs to the parvin family. As to quaternary structure, component of the heterotrimeric IPP (ILK-PINCH-PARVIN) complex composed of ILK, LIMS1/PINCH and PARVA; the complex binds to F-actin via the C-terminal tail of LIMS1 and the N-terminal region of PARVA, promoting F-actin filament bundling. Interacts with TGFB1I1. Interacts with ARHGAP31. Interacts with the actin cytoskeleton. Interacts (via C-terminus) with TESK1 (via C-terminus); the interaction inhibits TESK1 kinase activity. Interacts with PXN/PAXILLIN (via LD motif 4). As to expression, widely expressed.

It is found in the cell junction. The protein resides in the focal adhesion. Its subcellular location is the cell membrane. The protein localises to the cytoplasm. It localises to the cytoskeleton. It is found in the myofibril. The protein resides in the sarcomere. Its subcellular location is the z line. In terms of biological role, plays a role in sarcomere organization and in smooth muscle cell contraction. Required for normal development of the embryonic cardiovascular system, and for normal septation of the heart outflow tract. Plays a role in sprouting angiogenesis and is required for normal adhesion of vascular smooth muscle cells to endothelial cells during blood vessel development. Plays a role in the reorganization of the actin cytoskeleton, formation of lamellipodia and ciliogenesis. Plays a role in the establishment of cell polarity, cell adhesion, cell spreading, and directed cell migration. Within the IPP (ILK-PINCH-PARVIN) complex, binds to F-actin, promoting F-actin bundling, a process required to generate force for actin cytoskeleton reorganization and subsequent dynamic cell adhesion events such as cell spreading and migration. The chain is Alpha-parvin (Parva) from Rattus norvegicus (Rat).